Here is a 423-residue protein sequence, read N- to C-terminus: Gamma-glutamyl phosphate reductase (423 aa).

This sequence belongs to the gamma-glutamyl phosphate reductase family.

It is found in the cytoplasm. It catalyses the reaction L-glutamate 5-semialdehyde + phosphate + NADP(+) = L-glutamyl 5-phosphate + NADPH + H(+). Its pathway is amino-acid biosynthesis; L-proline biosynthesis; L-glutamate 5-semialdehyde from L-glutamate: step 2/2. Its function is as follows. Catalyzes the NADPH-dependent reduction of L-glutamate 5-phosphate into L-glutamate 5-semialdehyde and phosphate. The product spontaneously undergoes cyclization to form 1-pyrroline-5-carboxylate. The chain is Gamma-glutamyl phosphate reductase from Pseudomonas putida (strain W619).